A 1922-amino-acid polypeptide reads, in one-letter code: Kinesin-related protein 4 (1922 aa).

Residues 22 to 343 form the Kinesin motor domain; sequence KIKVAIRVRP…LQFAKRAKRV (322 aa). ATP is bound at residue 101-108; sequence GQTSSGKT. The disordered stretch occupies residues 448–538; that stretch reads QKIKKIKNSE…DDEFKDNLNL (91 aa). A compositionally biased stretch (low complexity) spans 456–468; the sequence is SENNISSSSSNSS. Acidic residues-rich tracts occupy residues 469-480 and 488-532; these read GEEDDDDKDDEN and DKDD…DDEF. A coiled-coil region spans residues 562 to 1712; that stretch reads QVKVKREDLD…ELESTKQKNL (1151 aa). The disordered stretch occupies residues 1887–1922; the sequence is TSTDNLTTTSTSLKSKSSSNGENKENQNNNIIIKNN.

Belongs to the TRAFAC class myosin-kinesin ATPase superfamily. Kinesin family.

It localises to the cytoplasm. The protein resides in the cytoskeleton. In terms of biological role, microtubule-associated force-producing protein that plays a role in organelle transport. Its motor activity is directed toward the microtubule's plus end. Cooperates with dynein in organizing spindle assembly during cell division. The polypeptide is Kinesin-related protein 4 (kif4) (Dictyostelium discoideum (Social amoeba)).